The following is a 351-amino-acid chain: Peroxidase C1B (351 aa).

Residues 1–28 (MHSPSSTSFTWILITLGCLAFYASLSDA) form the signal peptide. 4 cysteine pairs are disulfide-bonded: cysteine 39–cysteine 119, cysteine 72–cysteine 77, cysteine 125–cysteine 329, and cysteine 205–cysteine 237. Asparagine 41 carries an N-linked (GlcNAc...) asparagine glycan. The active-site Proton acceptor is histidine 70. Ca(2+)-binding residues include aspartate 71, valine 74, glycine 76, aspartate 78, and serine 80. A glycan (N-linked (GlcNAc...) asparagine) is linked at asparagine 85. Proline 167 lines the substrate pocket. Histidine 198 is a binding site for heme b. Position 199 (threonine 199) interacts with Ca(2+). N-linked (GlcNAc...) asparagine glycosylation is found at asparagine 214, asparagine 226, and asparagine 242. Ca(2+)-binding residues include aspartate 250, threonine 253, and aspartate 258. N-linked (GlcNAc...) asparagine glycosylation is present at asparagine 283.

Belongs to the peroxidase family. Classical plant (class III) peroxidase subfamily. The cofactor is Ca(2+). Requires heme b as cofactor.

It localises to the secreted. The protein resides in the vacuole. It carries out the reaction 2 a phenolic donor + H2O2 = 2 a phenolic radical donor + 2 H2O. Removal of H(2)O(2), oxidation of toxic reductants, biosynthesis and degradation of lignin, suberization, auxin catabolism, response to environmental stresses such as wounding, pathogen attack and oxidative stress. These functions might be dependent on each isozyme/isoform in each plant tissue. This is Peroxidase C1B (PRXC1B) from Armoracia rusticana (Horseradish).